Here is a 473-residue protein sequence, read N- to C-terminus: uncharacterized protein (473 aa).

The interval 1–86 is disordered; that stretch reads MSSSPTESEI…NTSNYGSSRD (86 aa). Positions 10-19 are enriched in basic and acidic residues; the sequence is ILPKESHNSI. Polar residues-rich tracts occupy residues 20-39 and 55-68; these read DEQS…NSFN and EPVQ…PNMA. Phosphoserine is present on serine 64. Over residues 69–83 the composition is skewed to low complexity; it reads SNESGNSENTSNYGS. RRM domains follow at residues 95–165, 188–260, and 305–370; these read LWMG…NHLF, IFVG…PIRV, and VFVG…RIRL. The interval 448–473 is disordered; sequence MHIPENGNSDTMPVPNTQGKHLSAEE. The segment covering 453 to 467 has biased composition (polar residues); that stretch reads NGNSDTMPVPNTQGK.

This is an uncharacterized protein from Schizosaccharomyces pombe (strain 972 / ATCC 24843) (Fission yeast).